Consider the following 449-residue polypeptide: Heterogeneous nuclear ribonucleoprotein H2 (449 aa).

Met1 carries the post-translational modification N-acetylmethionine. Met2 carries the N-acetylmethionine; in Heterogeneous nuclear ribonucleoprotein H2, N-terminally processed modification. The RRM 1 domain occupies 11 to 90 (FVVKVRGLPW…RYVEVFKSNS (80 aa)). Position 23 is a phosphoserine (Ser23). Residue Lys35 forms a Glycyl lysine isopeptide (Lys-Gly) (interchain with G-Cter in SUMO2) linkage. Ser54 and Ser63 each carry phosphoserine. Lys87 participates in a covalent cross-link: Glycyl lysine isopeptide (Lys-Gly) (interchain with G-Cter in SUMO2). Residue Ser90 is modified to Phosphoserine. Lys98 is covalently cross-linked (Glycyl lysine isopeptide (Lys-Gly) (interchain with G-Cter in SUMO2)). The region spanning 111-188 (GFVRLRGLPF…RYIEIFKSSR (78 aa)) is the RRM 2 domain. Position 233 is a dimethylated arginine; alternate (Arg233). At Arg233 the chain carries Omega-N-methylarginine; alternate. A 1-1 repeat occupies 234–249 (GAYGGGYGGYDDYGGY). Positions 234 to 433 (GAYGGGYGGY…YGGQSSMSGY (200 aa)) are 2 X 16 AA Gly-rich approximate repeats. Phosphotyrosine is present on Tyr246. Residues 289–364 (HCVHMRGLPY…RYVELFLNST (76 aa)) enclose the RRM 3 domain. Position 310 is a phosphoserine (Ser310). 3 repeat units span residues 354–372 (HRYV…GGAY), 374–392 (HSYV…GGAY), and 418–433 (GGYG…MSGY). The segment at 354–392 (HRYVELFLNSTAGTSGGAYDHSYVELFLNSTAGASGGAY) is 2 X 19 AA perfect repeats.

As to quaternary structure, component of a ribonucleoprotein complex containing mRNAs and RNA-binding proteins including DDX5, HNRNPH2 and SRSF1 as well as splicing regulator ARVCF. Interacts with TXNL4/DIM1.

It localises to the nucleus. The protein localises to the nucleoplasm. Functionally, this protein is a component of the heterogeneous nuclear ribonucleoprotein (hnRNP) complexes which provide the substrate for the processing events that pre-mRNAs undergo before becoming functional, translatable mRNAs in the cytoplasm. Binds poly(RG). The protein is Heterogeneous nuclear ribonucleoprotein H2 (Hnrnph2) of Mus musculus (Mouse).